The primary structure comprises 75 residues: Putative membrane protein insertion efficiency factor (75 aa).

The protein belongs to the UPF0161 family.

The protein resides in the cell membrane. Functionally, could be involved in insertion of integral membrane proteins into the membrane. The sequence is that of Putative membrane protein insertion efficiency factor (ytjA) from Bacillus subtilis (strain 168).